Reading from the N-terminus, the 209-residue chain is MKLNPDSLSRKENYRLLIGAVLPRPIAFVTTKSKAGVVNAAPFSFYNVLTAEPPLIGISVGRKPDGTPKDTARNGQEIGEFVVHVVDEQNVEAVNVSSIPLPPEESEVEYAGLTEVPSEVVSVPSLAESRIRLECKVENVIPIGGKGGEPAADFLIGRVVHYEVADDLFQDGGIDTEALRPVSRLAGNEYGKYGETFSLDRPTISQNRE.

The protein belongs to the flavoredoxin family. FMN is required as a cofactor.

This is an uncharacterized protein from Halalkalibacterium halodurans (strain ATCC BAA-125 / DSM 18197 / FERM 7344 / JCM 9153 / C-125) (Bacillus halodurans).